The following is a 212-amino-acid chain: Large ribosomal subunit protein uL3 (212 aa).

The disordered stretch occupies residues 134–154; sequence RKTHGNSVSHRVPGSIGQNQT. Q153 carries the N5-methylglutamine modification.

This sequence belongs to the universal ribosomal protein uL3 family. In terms of assembly, part of the 50S ribosomal subunit. Forms a cluster with proteins L14 and L19. Methylated by PrmB.

Functionally, one of the primary rRNA binding proteins, it binds directly near the 3'-end of the 23S rRNA, where it nucleates assembly of the 50S subunit. The protein is Large ribosomal subunit protein uL3 of Dichelobacter nodosus (strain VCS1703A).